We begin with the raw amino-acid sequence, 543 residues long: EH domain-containing protein 2 (543 aa).

A phosphoserine mark is found at serine 3 and serine 44. In terms of domain architecture, Dynamin-type G spans 55-286; the sequence is FDGKPMVLVA…DLFRDIQGLP (232 aa). Residues 65-72 form a G1 motif region; the sequence is GQYSTGKT. 65 to 72 contacts ATP; the sequence is GQYSTGKT. The tract at residues 91-92 is G2 motif; the sequence is EP. Residues 153-156 form a G3 motif region; that stretch reads DTPG. Positions 219–222 are G4 motif; that stretch reads NKAD. ATP is bound at residue lysine 220. Residue valine 243 is a region of interest, G5 motif. Tryptophan 258 serves as a coordination point for ATP. The segment at 320–340 is mediates membrane-binding; that stretch reads SVFGKENKKKQLIFKLPVIFA. Residues serine 438, serine 468, serine 470, serine 484, and serine 493 each carry the phosphoserine modification. The EH domain occupies 449-537; that stretch reads DKSKYDEIFY…RRLVPPSKRR (89 aa). One can recognise an EF-hand domain in the interval 481 to 516; it reads LPNSVLGRIWKLSDVDRDGMLDDEEFALASHLIEAK. Positions 494, 496, 498, 500, and 505 each coordinate Ca(2+). Residues 521 to 543 are disordered; sequence GLPTNLPRRLVPPSKRRQKGSAE. A compositionally biased stretch (basic residues) spans 534 to 543; it reads SKRRQKGSAE.

Belongs to the TRAFAC class dynamin-like GTPase superfamily. Dynamin/Fzo/YdjA family. EHD subfamily. As to quaternary structure, homodimer and homooligomer. Interacts with EHD1. May also interact with EHD3 and EHD4. Interacts with MYOF. Interacts with EHBP1. Interacts with FER1L5 (via second C2 domain). Interacts with CAV1 in a cholesterol-dependent manner. Interacts (via EH domain) with PACSIN2 (via NPF motifs); this interaction probably stabilizes the caveolae.

The protein resides in the cell membrane. Its subcellular location is the membrane. It localises to the caveola. The protein localises to the endosome membrane. It is found in the cytoplasm. The protein resides in the cytosol. The very low intrinsic ATPase activity is increased upon interaction with liposomes. In terms of biological role, ATP- and membrane-binding protein that controls membrane reorganization/tubulation upon ATP hydrolysis. Plays a role in membrane trafficking between the plasma membrane and endosomes. Important for the internalization of GLUT4. Required for fusion of myoblasts to skeletal muscle myotubes. Required for normal translocation of FER1L5 to the plasma membrane. Regulates the equilibrium between cell surface-associated and cell surface-dissociated caveolae by constraining caveolae at the cell membrane. This chain is EH domain-containing protein 2, found in Rattus norvegicus (Rat).